The primary structure comprises 140 residues: Organic hydroperoxide resistance protein-like (140 aa).

This sequence belongs to the OsmC/Ohr family.

This is Organic hydroperoxide resistance protein-like from Staphylococcus aureus (strain USA300).